The primary structure comprises 878 residues: Phosphoenolpyruvate carboxylase (878 aa).

Catalysis depends on residues His-137 and Lys-545.

This sequence belongs to the PEPCase type 1 family. Requires Mg(2+) as cofactor.

The catalysed reaction is oxaloacetate + phosphate = phosphoenolpyruvate + hydrogencarbonate. Forms oxaloacetate, a four-carbon dicarboxylic acid source for the tricarboxylic acid cycle. This Serratia proteamaculans (strain 568) protein is Phosphoenolpyruvate carboxylase.